Reading from the N-terminus, the 129-residue chain is Large ribosomal subunit protein uL14m (129 aa).

This sequence belongs to the universal ribosomal protein uL14 family.

It localises to the mitochondrion. This Acanthamoeba castellanii (Amoeba) protein is Large ribosomal subunit protein uL14m (RPL14).